The following is a 338-amino-acid chain: Glyceraldehyde-3-phosphate dehydrogenase (338 aa).

Residues 11-12 and Gly-111 contribute to the NAD(+) site; that span reads TI. Position 140-142 (140-142) interacts with D-glyceraldehyde 3-phosphate; the sequence is SCN. Cys-141 serves as the catalytic Nucleophile. Arg-169 provides a ligand contact to NAD(+). Position 195 to 196 (195 to 196) interacts with D-glyceraldehyde 3-phosphate; that stretch reads HG. Gln-302 provides a ligand contact to NAD(+).

Belongs to the glyceraldehyde-3-phosphate dehydrogenase family. In terms of assembly, homotetramer.

It is found in the cytoplasm. It carries out the reaction D-glyceraldehyde 3-phosphate + phosphate + NADP(+) = (2R)-3-phospho-glyceroyl phosphate + NADPH + H(+). The catalysed reaction is D-glyceraldehyde 3-phosphate + phosphate + NAD(+) = (2R)-3-phospho-glyceroyl phosphate + NADH + H(+). It functions in the pathway carbohydrate degradation; glycolysis; pyruvate from D-glyceraldehyde 3-phosphate: step 1/5. The sequence is that of Glyceraldehyde-3-phosphate dehydrogenase (gap) from Methanobacterium formicicum.